The chain runs to 197 residues: A-type ATP synthase subunit E 2 (197 aa).

The protein belongs to the V-ATPase E subunit family. As to quaternary structure, has multiple subunits with at least A(3), B(3), C, D, E, F, H, I and proteolipid K(x).

The protein resides in the cell membrane. Its function is as follows. Component of the A-type ATP synthase that produces ATP from ADP in the presence of a proton gradient across the membrane. In Methanospirillum hungatei JF-1 (strain ATCC 27890 / DSM 864 / NBRC 100397 / JF-1), this protein is A-type ATP synthase subunit E 2.